A 529-amino-acid chain; its full sequence is Peptide chain release factor 3 (529 aa).

In terms of domain architecture, tr-type G spans 11–280 (ARRRTFAIIS…GLVEWAPSPM (270 aa)). GTP-binding positions include 20 to 27 (SHPDAGKT), 88 to 92 (DTPGH), and 142 to 145 (NKLD).

The protein belongs to the TRAFAC class translation factor GTPase superfamily. Classic translation factor GTPase family. PrfC subfamily.

Its subcellular location is the cytoplasm. Increases the formation of ribosomal termination complexes and stimulates activities of RF-1 and RF-2. It binds guanine nucleotides and has strong preference for UGA stop codons. It may interact directly with the ribosome. The stimulation of RF-1 and RF-2 is significantly reduced by GTP and GDP, but not by GMP. The chain is Peptide chain release factor 3 from Erwinia tasmaniensis (strain DSM 17950 / CFBP 7177 / CIP 109463 / NCPPB 4357 / Et1/99).